The sequence spans 237 residues: MRFSPQLEQGRLLVRYKRFLADIETDSGELLTIHCPNTGSMLNCMMPGGRVWFSRSNDPKRKLPGTWEISETPQGRLACINTGRANTLVEEALRAGVISELTGFTALKREVAYGQEKSRVDFRLEYPDGYLYLEVKSVTLGFDGSSVAAFPDAVTQRGARHLRELATLAREGVRAVLLYCVNLTGIDAVRPAQEIDPAYAAALREAIDAGVQILAYGAQLTSEEIFIDRRLQVHGLD.

It belongs to the SfsA family.

This is Sugar fermentation stimulation protein homolog from Pseudomonas syringae pv. syringae (strain B728a).